Reading from the N-terminus, the 520-residue chain is Cytochrome P450 716A67 (520 aa).

Residues 4-24 form a helical membrane-spanning segment; the sequence is SLAIYYGIILITVTLGLVYTW. Cysteine 466 provides a ligand contact to heme.

Belongs to the cytochrome P450 family. Heme is required as a cofactor.

The protein localises to the membrane. In terms of biological role, catalyzes hydroxylation at the C-2 position of different intermediates of the hemolytic sapogenin biosynthetic pathway downstream of oleanolic acid synthesis. This is Cytochrome P450 716A67 from Medicago truncatula (Barrel medic).